The following is an 848-amino-acid chain: F-BAR domain only protein 2 (848 aa).

Residues 4 to 250 (PYFLENFWGN…NMENTSVESL (247 aa)) enclose the F-BAR domain. Residues 87-114 (HMELVRKLQELIKEVQKYVDEQAKNHKK) adopt a coiled-coil conformation. Disordered stretches follow at residues 292–316 (IPGRRKEKDTDSTESTEVEAVNASN) and 404–526 (LSPT…RAES). 2 positions are modified to phosphoserine: S405 and S417. Low complexity predominate over residues 445–460 (PFGPTSTGSSSSLPQS). Positions 580–848 (ALPIAVAFTE…FATGRYMADC (269 aa)) constitute an MHD domain.

It belongs to the FCHO family. Homodimer.

The protein resides in the membrane. It localises to the clathrin-coated pit. May function in an early step of clathrin-mediated endocytosis. The sequence is that of F-BAR domain only protein 2 (fcho2) from Danio rerio (Zebrafish).